The following is a 967-amino-acid chain: Phosphatidylserine decarboxylase proenzyme 3 (967 aa).

The segment at 217 to 255 (FIAEPDSSIPPSESSVSISTDTGKETPPSKSKKSSNQPY) is disordered. A compositionally biased stretch (low complexity) spans 220-237 (EPDSSIPPSESSVSISTD). The C2 domain maps to 250 to 373 (SSNQPYVSIG…SSAQVDPETG (124 aa)). Ca(2+) is bound by residues Asp-343, Ser-346, and Asp-349. A compositionally biased stretch (low complexity) spans 532 to 544 (DQQATQTPQSPSS). The tract at residues 532 to 566 (DQQATQTPQSPSSNEESGPGTPTQTSDQYEDSEDS) is disordered. Polar residues predominate over residues 545–558 (NEESGPGTPTQTSD). Residues Asp-769, His-825, and Ser-912 each act as charge relay system; for autoendoproteolytic cleavage activity in the active site. The Schiff-base intermediate with substrate; via pyruvic acid; for decarboxylase activity role is filled by Ser-912. Position 912 is a pyruvic acid (Ser); by autocatalysis (Ser-912). A disordered region spans residues 947 to 967 (IGQKIDPNKPTDAEDHSKSDS).

It belongs to the phosphatidylserine decarboxylase family. PSD-B subfamily. Eukaryotic type II sub-subfamily. Heterodimer of a large membrane-associated beta subunit and a small pyruvoyl-containing alpha subunit. Requires pyruvate as cofactor. The cofactor is Ca(2+). Post-translationally, is synthesized initially as an inactive proenzyme. Formation of the active enzyme involves a self-maturation process in which the active site pyruvoyl group is generated from an internal serine residue via an autocatalytic post-translational modification. Two non-identical subunits are generated from the proenzyme in this reaction, and the pyruvate is formed at the N-terminus of the alpha chain, which is derived from the carboxyl end of the proenzyme. The autoendoproteolytic cleavage occurs by a canonical serine protease mechanism, in which the side chain hydroxyl group of the serine supplies its oxygen atom to form the C-terminus of the beta chain, while the remainder of the serine residue undergoes an oxidative deamination to produce ammonia and the pyruvoyl prosthetic group on the alpha chain. During this reaction, the Ser that is part of the protease active site of the proenzyme becomes the pyruvoyl prosthetic group, which constitutes an essential element of the active site of the mature decarboxylase.

The protein localises to the golgi apparatus membrane. The protein resides in the endosome membrane. Its subcellular location is the cytoplasm. The catalysed reaction is a 1,2-diacyl-sn-glycero-3-phospho-L-serine + H(+) = a 1,2-diacyl-sn-glycero-3-phosphoethanolamine + CO2. Its pathway is phospholipid metabolism; phosphatidylethanolamine biosynthesis; phosphatidylethanolamine from CDP-diacylglycerol: step 2/2. In terms of biological role, catalyzes the formation of phosphatidylethanolamine (PtdEtn) from phosphatidylserine (PtdSer). Plays a central role in phospholipid metabolism and in the interorganelle trafficking of phosphatidylserine. Together with psd1 and psd2, responsible for the majority of phosphatidylethanolamine synthesis. The sequence is that of Phosphatidylserine decarboxylase proenzyme 3 from Schizosaccharomyces pombe (strain 972 / ATCC 24843) (Fission yeast).